The chain runs to 456 residues: Protein MGA1 (456 aa).

The DNA-binding element occupies 3–118 (PKTFVHQLHA…ILNKIQRKST (116 aa)). The segment at 229 to 299 (SIVQPQQPQQ…QPLPTVPPYS (71 aa)) is disordered. Low complexity-rich tracts occupy residues 231–246 (VQPQQPQQVLSPQALS), 253–267 (SGTLSSTDDLKTTSL), and 283–299 (QQQQQQQQPLPTVPPYS).

It belongs to the HSF family.

It localises to the nucleus. The protein is Protein MGA1 (MGA1) of Saccharomyces cerevisiae (strain ATCC 204508 / S288c) (Baker's yeast).